We begin with the raw amino-acid sequence, 66 residues long: Large ribosomal subunit protein bL32 (66 aa).

Over residues 1–19 (MAIVPKRKTSKQRKHKRNT) the composition is skewed to basic residues. Residues 1–21 (MAIVPKRKTSKQRKHKRNTHS) form a disordered region.

The protein belongs to the bacterial ribosomal protein bL32 family.

This Mycoplasmopsis synoviae (strain 53) (Mycoplasma synoviae) protein is Large ribosomal subunit protein bL32.